The following is a 419-amino-acid chain: Serine--tRNA ligase (419 aa).

The interval A45 to E66 is disordered. Residue T226 to E228 participates in L-serine binding. ATP-binding positions include R257–E259 and V273. E280 contributes to the L-serine binding site. Position 344–347 (E344–S347) interacts with ATP. T379 provides a ligand contact to L-serine.

This sequence belongs to the class-II aminoacyl-tRNA synthetase family. Type-1 seryl-tRNA synthetase subfamily. As to quaternary structure, homodimer. The tRNA molecule binds across the dimer.

It is found in the cytoplasm. The catalysed reaction is tRNA(Ser) + L-serine + ATP = L-seryl-tRNA(Ser) + AMP + diphosphate + H(+). The enzyme catalyses tRNA(Sec) + L-serine + ATP = L-seryl-tRNA(Sec) + AMP + diphosphate + H(+). The protein operates within aminoacyl-tRNA biosynthesis; selenocysteinyl-tRNA(Sec) biosynthesis; L-seryl-tRNA(Sec) from L-serine and tRNA(Sec): step 1/1. Catalyzes the attachment of serine to tRNA(Ser). Is also able to aminoacylate tRNA(Sec) with serine, to form the misacylated tRNA L-seryl-tRNA(Sec), which will be further converted into selenocysteinyl-tRNA(Sec). This Mycobacterium ulcerans (strain Agy99) protein is Serine--tRNA ligase.